The sequence spans 293 residues: MTTIPSSATSATKTLGGTELARGIRAEVTSAAAELTLLGVTPRLAVVVATDDESSAWYVRSIARAAAKSGLLCDIVDLGADATTQSIRAELQRLSADPAVHGIILQTPLPAGANFEDLAASIAPDKDVDGANPLSLGRLAAGLPAYAPATAAAVLALLDHHEVPLAGRTGVVVGRSNVVGKPAAQLLLQRDATVTVCHRYTQNLGHHTRTADVLVVAVGRPGLITAQHVAEHTVVIDVGTNPTDDGGLVGDVDETSVSGRVAGLTPVPGGVGPVTTALLLQHTIQSASRSEPS.

Residues 174–176 and Thr-240 each bind NADP(+); that span reads GRS.

This sequence belongs to the tetrahydrofolate dehydrogenase/cyclohydrolase family. Homodimer.

The enzyme catalyses (6R)-5,10-methylene-5,6,7,8-tetrahydrofolate + NADP(+) = (6R)-5,10-methenyltetrahydrofolate + NADPH. The catalysed reaction is (6R)-5,10-methenyltetrahydrofolate + H2O = (6R)-10-formyltetrahydrofolate + H(+). It functions in the pathway one-carbon metabolism; tetrahydrofolate interconversion. Functionally, catalyzes the oxidation of 5,10-methylenetetrahydrofolate to 5,10-methenyltetrahydrofolate and then the hydrolysis of 5,10-methenyltetrahydrofolate to 10-formyltetrahydrofolate. The chain is Bifunctional protein FolD 1 from Saccharopolyspora erythraea (strain ATCC 11635 / DSM 40517 / JCM 4748 / NBRC 13426 / NCIMB 8594 / NRRL 2338).